The primary structure comprises 906 residues: Protein translocase subunit SecA (906 aa).

ATP contacts are provided by residues Q86, 104-108 (GEGKT), and D511. Composition is skewed to basic and acidic residues over residues 853–865 (HESV…RHDE) and 877–888 (VRREGPKVKRND). The segment at 853 to 906 (HESVIDNNQRHDEDEQEEAPKVQQVRREGPKVKRNDPCPCGSGKKYKQCHSKVE) is disordered. Zn(2+) is bound by residues C890, C892, C901, and H902. Positions 896–906 (KKYKQCHSKVE) are enriched in basic residues.

It belongs to the SecA family. As to quaternary structure, monomer and homodimer. Part of the essential Sec protein translocation apparatus which comprises SecA, SecYEG and auxiliary proteins SecDF-YajC and YidC. Zn(2+) is required as a cofactor.

Its subcellular location is the cell inner membrane. It is found in the cytoplasm. The enzyme catalyses ATP + H2O + cellular proteinSide 1 = ADP + phosphate + cellular proteinSide 2.. Functionally, part of the Sec protein translocase complex. Interacts with the SecYEG preprotein conducting channel. Has a central role in coupling the hydrolysis of ATP to the transfer of proteins into and across the cell membrane, serving both as a receptor for the preprotein-SecB complex and as an ATP-driven molecular motor driving the stepwise translocation of polypeptide chains across the membrane. The chain is Protein translocase subunit SecA from Francisella tularensis subsp. tularensis (strain WY96-3418).